Here is a 354-residue protein sequence, read N- to C-terminus: Uroporphyrinogen decarboxylase (354 aa).

Residues 27 to 31 (RQAGR), Asp-77, Tyr-154, Ser-209, and His-327 contribute to the substrate site.

It belongs to the uroporphyrinogen decarboxylase family. In terms of assembly, homodimer.

It localises to the cytoplasm. It carries out the reaction uroporphyrinogen III + 4 H(+) = coproporphyrinogen III + 4 CO2. It participates in porphyrin-containing compound metabolism; protoporphyrin-IX biosynthesis; coproporphyrinogen-III from 5-aminolevulinate: step 4/4. Catalyzes the decarboxylation of four acetate groups of uroporphyrinogen-III to yield coproporphyrinogen-III. This is Uroporphyrinogen decarboxylase from Pseudomonas savastanoi pv. phaseolicola (strain 1448A / Race 6) (Pseudomonas syringae pv. phaseolicola (strain 1448A / Race 6)).